We begin with the raw amino-acid sequence, 593 residues long: Aspartate--tRNA(Asp/Asn) ligase (593 aa).

E172 serves as a coordination point for L-aspartate. Residues 196–199 (QLFK) are aspartate. R218 serves as a coordination point for L-aspartate. ATP is bound by residues 218–220 (RDE) and Q227. An L-aspartate-binding site is contributed by H450. E484 is a binding site for ATP. Position 491 (R491) interacts with L-aspartate. An ATP-binding site is contributed by 536-539 (GLDR).

This sequence belongs to the class-II aminoacyl-tRNA synthetase family. Type 1 subfamily. As to quaternary structure, homodimer.

The protein localises to the cytoplasm. The catalysed reaction is tRNA(Asx) + L-aspartate + ATP = L-aspartyl-tRNA(Asx) + AMP + diphosphate. Aspartyl-tRNA synthetase with relaxed tRNA specificity since it is able to aspartylate not only its cognate tRNA(Asp) but also tRNA(Asn). Reaction proceeds in two steps: L-aspartate is first activated by ATP to form Asp-AMP and then transferred to the acceptor end of tRNA(Asp/Asn). This chain is Aspartate--tRNA(Asp/Asn) ligase, found in Nitrosomonas eutropha (strain DSM 101675 / C91 / Nm57).